We begin with the raw amino-acid sequence, 557 residues long: Tripeptidyl-peptidase 1 (557 aa).

A signal peptide spans methionine 1–glycine 16. Positions glutamate 17–glycine 190 are cleaved as a propeptide — removed in mature form. The N-linked (GlcNAc...) asparagine glycan is linked to asparagine 53. Cysteines 107 and 118 form a disulfide. The region spanning glycine 194–aspartate 557 is the Peptidase S53 domain. N-linked (GlcNAc...) asparagine glycosylation is found at asparagine 205 and asparagine 216. Active-site charge relay system residues include glutamate 266 and aspartate 270. Asparagine 280, asparagine 307, and asparagine 438 each carry an N-linked (GlcNAc...) asparagine glycan. 2 cysteine pairs are disulfide-bonded: cysteine 359–cysteine 521 and cysteine 517–cysteine 532. Catalysis depends on serine 470, which acts as the Charge relay system. Positions 512 and 513 each coordinate Ca(2+). Position 538 (aspartate 538) interacts with Ca(2+).

Requires Ca(2+) as cofactor. Post-translationally, activated by autocatalytic proteolytical processing.

It is found in the lysosome. The catalysed reaction is Release of an N-terminal tripeptide from a polypeptide, but also has endopeptidase activity.. Its function is as follows. Lysosomal serine protease with tripeptidyl-peptidase I activity. May act as a non-specific lysosomal peptidase which generates tripeptides from the breakdown products produced by lysosomal proteinases. Requires substrates with an unsubstituted N-terminus. The chain is Tripeptidyl-peptidase 1 from Danio rerio (Zebrafish).